The sequence spans 925 residues: Protein translocase subunit SecA (925 aa).

Residues Gln87, 105–109, and Asp531 contribute to the ATP site; that span reads GEGKT. Residues 867–909 form a disordered region; it reads AAGADMRFQHSQPESVLHKPEAGEGEEAQPFRRETPKVGRNDP. Residues 895 to 906 show a composition bias toward basic and acidic residues; it reads QPFRRETPKVGR. Residues Cys910, Cys912, Cys921, and His922 each contribute to the Zn(2+) site.

The protein belongs to the SecA family. As to quaternary structure, monomer and homodimer. Part of the essential Sec protein translocation apparatus which comprises SecA, SecYEG and auxiliary proteins SecDF-YajC and YidC. Requires Zn(2+) as cofactor.

It is found in the cell inner membrane. It localises to the cytoplasm. It catalyses the reaction ATP + H2O + cellular proteinSide 1 = ADP + phosphate + cellular proteinSide 2.. Part of the Sec protein translocase complex. Interacts with the SecYEG preprotein conducting channel. Has a central role in coupling the hydrolysis of ATP to the transfer of proteins into and across the cell membrane, serving both as a receptor for the preprotein-SecB complex and as an ATP-driven molecular motor driving the stepwise translocation of polypeptide chains across the membrane. The chain is Protein translocase subunit SecA from Thioalkalivibrio sulfidiphilus (strain HL-EbGR7).